The chain runs to 625 residues: MGLVNGRASLTFLLAALTIIAMVVEARFVVEKESISVLNPEEMRSKHDGSIANFGLPDYGGFLIGSVVYPDSKTDGCSAFGKTFKPKFPRPTILLLDRGGCYFALKAWHAQQAGAAAVLVADNVDEPLLTMDSPEESKDADGFIEKLTIPSVLIDKSFGDDLRQGFQKGKNIVIKLDWRESVPHPDKRVEYELWTNSNDECGARCDEQMDFVKNFKGHAQILEKGGYTAFTPHYITWFCPFQFINSPHCKSQCINHGRYCAPDPEDNFREGYEGKDVVLENLRQLCVHRVANESSRPWVWWDYVTDFHSRCSMKEKKYSIDCAESVIKSLNLPIEKIKKCIGDPEADTENQVLRTEQVSQIGRGNRGDVTILPTLVINNAQYRGRLERTAVLKAICAGFNETSEPAICLNTGLETNECLENNGGCWQDTKANITACQDTFRGRLCECPVVKGVQYKGDGYTSCTPYGPARCTMNNGGCWSDTRNGLTFSACSDSVSTGCKCPEGFQGDGLTCEDINECKERSVCQCSGCRCKNSWGGYKCSCSGDRLYINDQDTCIERYGSKTAWWLTFLILAIVAVAGLAGYIFYKYRFRSYMDSEIMTIMSQYMPLESQRAREVPSEAEPFTL.

A signal peptide spans 1-26 (MGLVNGRASLTFLLAALTIIAMVVEA). The Lumenal segment spans residues 27–564 (RFVVEKESIS…CIERYGSKTA (538 aa)). Residues 58 to 166 (DYGGFLIGSV…SFGDDLRQGF (109 aa)) form the PA domain. 3 N-linked (GlcNAc...) asparagine glycosylation sites follow: Asn292, Asn400, and Asn432. EGF-like domains lie at 414-464 (ETNE…TSCT) and 467-513 (GPAR…LTCE). Intrachain disulfides connect Cys418/Cys436, Cys425/Cys445, Cys447/Cys463, Cys471/Cys491, Cys478/Cys499, Cys501/Cys512, and Cys542/Cys555. In terms of domain architecture, EGF-like 3; calcium-binding spans 514-556 (DINECKERSVCQCSGCRCKNSWGGYKCSCSGDRLYINDQDTCI). The helical transmembrane segment at 565–585 (WWLTFLILAIVAVAGLAGYIF) threads the bilayer. Over 586-625 (YKYRFRSYMDSEIMTIMSQYMPLESQRAREVPSEAEPFTL) the chain is Cytoplasmic. The Tyrosine-based internalization motif motif lies at 605 to 608 (YMPL).

This sequence belongs to the VSR (BP-80) family. As to expression, expressed at low levels in seedlings, roots, young leaves, flowers and siliques.

The protein localises to the golgi apparatus membrane. In terms of biological role, vacuolar-sorting receptor (VSR) involved in clathrin-coated vesicles sorting from Golgi apparatus to vacuoles. This chain is Vacuolar-sorting receptor 7 (VSR7), found in Arabidopsis thaliana (Mouse-ear cress).